The sequence spans 309 residues: Probable manganese-dependent inorganic pyrophosphatase (309 aa).

Mn(2+)-binding residues include His-9, Asp-13, Asp-15, Asp-75, His-97, and Asp-149.

This sequence belongs to the PPase class C family. Mn(2+) serves as cofactor.

Its subcellular location is the cytoplasm. It catalyses the reaction diphosphate + H2O = 2 phosphate + H(+). The chain is Probable manganese-dependent inorganic pyrophosphatase from Bacillus cereus (strain AH187).